Consider the following 136-residue polypeptide: Ribosome-binding factor A (136 aa).

Residues 116–136 form a disordered region; it reads AGNHKASDEEESDDKGHEDEQ.

It belongs to the RbfA family. Monomer. Binds 30S ribosomal subunits, but not 50S ribosomal subunits or 70S ribosomes.

The protein resides in the cytoplasm. In terms of biological role, one of several proteins that assist in the late maturation steps of the functional core of the 30S ribosomal subunit. Associates with free 30S ribosomal subunits (but not with 30S subunits that are part of 70S ribosomes or polysomes). Required for efficient processing of 16S rRNA. May interact with the 5'-terminal helix region of 16S rRNA. The protein is Ribosome-binding factor A of Lachnoclostridium phytofermentans (strain ATCC 700394 / DSM 18823 / ISDg) (Clostridium phytofermentans).